The sequence spans 318 residues: Nodulation protein D 2 (318 aa).

In terms of domain architecture, HTH lysR-type spans 6-63; that stretch reads LDLNLLVALDALTTERNLTAAARSINLSQPAMSAAIGRLRDYFRDELFTMNGRELRLT. Positions 23–42 form a DNA-binding region, H-T-H motif; sequence LTAAARSINLSQPAMSAAIG.

It belongs to the LysR transcriptional regulatory family.

Functionally, nodD regulates the expression of the nodABCFE genes which encode other nodulation proteins. NodD is also a negative regulator of its own expression. Binds flavonoids as inducers. This Rhizobium leguminosarum bv. phaseoli protein is Nodulation protein D 2 (nodD2).